The sequence spans 181 residues: High mobility group protein B4 (181 aa).

A DNA-binding region (HMG box 1) is located at residues Pro9 to Ile79. Basic residues predominate over residues Gly80–Asp89. A disordered region spans residues Gly80–Phe100. Residues Pro93–Arg161 constitute a DNA-binding region (HMG box 2).

This sequence belongs to the HMGB family. Expressed in adult germ cells (at protein level).

It localises to the nucleus. The protein localises to the chromosome. In Mus musculus (Mouse), this protein is High mobility group protein B4 (Hmgb4).